Here is a 381-residue protein sequence, read N- to C-terminus: ELMO domain-containing protein 3 (381 aa).

Residues 170–324 (THGRVLQTIY…DLEALAKKSP (155 aa)) form the ELMO domain.

As to expression, both isoform 1 and isoform 2 are widely expressed.

It localises to the cell projection. The protein resides in the stereocilium. It is found in the kinocilium. Its subcellular location is the cytoplasm. The protein localises to the cytoskeleton. Its function is as follows. Acts as a GTPase-activating protein (GAP) for ARL2 with low specific activity. This chain is ELMO domain-containing protein 3 (Elmod3), found in Mus musculus (Mouse).